The sequence spans 972 residues: Aminopeptidase Ey (972 aa).

The Cytoplasmic segment spans residues 2–10 (AAGFFISKS). A helical; Signal-anchor for type II membrane protein transmembrane segment spans residues 11-31 (VGIVGIVLALGAVATIIALSV). Residues 32 to 972 (VYAQEKNKSS…AWFRAETASS (941 aa)) lie on the Extracellular side of the membrane. The interval 33-72 (YAQEKNKSSGGSGGSDTTSTTTASTTTTSTTTASTTAAPN) is cytosolic Ser/Thr-rich junction. Residues 37 to 77 (KNKSSGGSGGSDTTSTTTASTTTTSTTTASTTAAPNNPWNR) are disordered. N-linked (GlcNAc...) asparagine glycosylation is present at Asn38. Over residues 47-70 (SDTTSTTTASTTTTSTTTASTTAA) the composition is skewed to low complexity. The metalloprotease stretch occupies residues 73–967 (NPWNRWRLPT…KEVVHAWFRA (895 aa)). Residues Asn110, Asn132, Asn147, Asn206, Asn269, and Asn296 are each glycosylated (N-linked (GlcNAc...) asparagine). Position 355 to 359 (355 to 359 (GAMEN)) interacts with substrate. Residue His391 coordinates Zn(2+). The active-site Proton acceptor is Glu392. His395 and Glu414 together coordinate Zn(2+). N-linked (GlcNAc...) asparagine glycans are attached at residues Asn513, Asn574, Asn584, Asn628, Asn684, and Asn742. A disulfide bond links Cys764 and Cys771. A glycan (N-linked (GlcNAc...) asparagine) is linked at Asn785. Cys801 and Cys837 are disulfide-bonded.

Belongs to the peptidase M1 family. As to quaternary structure, homodimer. Requires Zn(2+) as cofactor. As to expression, detected in the plasma and granule fractions of egg yolk (at protein level).

The protein resides in the cell membrane. The catalysed reaction is Differs from other aminopeptidases in broad specificity for amino acids in the P1 position and the ability to hydrolyze peptides of four or five residues that contain Pro in the P1' position.. In terms of biological role, broad specificity aminopeptidase. Degrades a variety of peptides possessing various N-terminal amino acids including hydrophobic, basic and acidic amino acids. Preferentially hydrolyzes small peptides consisting of 4 or 5 amino acids. Hydrolyzes the N-terminal Xaa-Pro bonds in the chicken brain peptide Leu-Pro-Leu-Arg-PheNH2, the substance P fragment Arg-Pro-Lys-Pro and the bradykinin fragment Arg-Pro-Pro-Gly-Phe. Hydrolyzes the N-formylated peptides fMet-Leu-Phe, fMet-Ala-Gly-Ser-Glu and fMet-Nle-Leu-Phe-Nle-Tyr-Lys, but does not hydrolyze peptides with acetylation or pyroglutamic acid at N-terminus. Does not hydrolyze large peptides such as complete substance P, bradykinin or schistoFLRFamide. This is Aminopeptidase Ey (ANPEP) from Gallus gallus (Chicken).